Here is a 369-residue protein sequence, read N- to C-terminus: MVINKNLEEQVIDLFYKLGFPKDLFGFIWIITPILTYTLGVTIGISVIVWLERKISAGVQQRIGPEHAGPLGIIQALADGAKLLSKEDIIPSRGDSFLFNVGPVMVVVPVFLSYLVIPLGHGIILADLDIGVFFWIAVSSVAPLGLLTAGYGSNNKYSSLGGLRAAAQSISYEIPLALCVLSVSPLSNSLSTVDIVEAQSKYGFWGWNSWRQPIGFVAFFISSLAECERLPFDLPEAEEELVAGYQTEYSGIKFGLFYVASHPNLLTSSLSATILYLGGWNSPIPFLFLPKFDRLGWNSTDETSEVISITIAIIITLAKAYSFLFISIATRWTLPRVRMDQLLDLGWKSLLPVALGNSLPTASFQLSSP.

Helical transmembrane passes span 25 to 45, 104 to 124, 130 to 150, 270 to 290, and 306 to 326; these read FGFI…TIGI, VMVV…HGII, IGVF…LTAG, LSAT…LFLP, and VISI…FLFI.

The protein belongs to the complex I subunit 1 family. As to quaternary structure, NDH is composed of at least 16 different subunits, 5 of which are encoded in the nucleus.

It is found in the plastid. The protein resides in the chloroplast thylakoid membrane. The catalysed reaction is a plastoquinone + NADH + (n+1) H(+)(in) = a plastoquinol + NAD(+) + n H(+)(out). The enzyme catalyses a plastoquinone + NADPH + (n+1) H(+)(in) = a plastoquinol + NADP(+) + n H(+)(out). NDH shuttles electrons from NAD(P)H:plastoquinone, via FMN and iron-sulfur (Fe-S) centers, to quinones in the photosynthetic chain and possibly in a chloroplast respiratory chain. The immediate electron acceptor for the enzyme in this species is believed to be plastoquinone. Couples the redox reaction to proton translocation, and thus conserves the redox energy in a proton gradient. The sequence is that of NAD(P)H-quinone oxidoreductase subunit 1, chloroplastic from Huperzia lucidula (Shining clubmoss).